A 227-amino-acid chain; its full sequence is Cytochrome c oxidase subunit 2 (227 aa).

The Mitochondrial intermembrane segment spans residues M1–S14. The chain crosses the membrane as a helical span at residues P15–M45. Over L46–Q59 the chain is Mitochondrial matrix. A helical transmembrane segment spans residues E60–M87. Topologically, residues D88–T227 are mitochondrial intermembrane. Positions 161, 196, 198, 200, 204, and 207 each coordinate Cu cation. E198 serves as a coordination point for Mg(2+).

The protein belongs to the cytochrome c oxidase subunit 2 family. Component of the cytochrome c oxidase (complex IV, CIV), a multisubunit enzyme composed of 14 subunits. The complex is composed of a catalytic core of 3 subunits MT-CO1, MT-CO2 and MT-CO3, encoded in the mitochondrial DNA, and 11 supernumerary subunits COX4I, COX5A, COX5B, COX6A, COX6B, COX6C, COX7A, COX7B, COX7C, COX8 and NDUFA4, which are encoded in the nuclear genome. The complex exists as a monomer or a dimer and forms supercomplexes (SCs) in the inner mitochondrial membrane with NADH-ubiquinone oxidoreductase (complex I, CI) and ubiquinol-cytochrome c oxidoreductase (cytochrome b-c1 complex, complex III, CIII), resulting in different assemblies (supercomplex SCI(1)III(2)IV(1) and megacomplex MCI(2)III(2)IV(2)). Found in a complex with TMEM177, COA6, COX18, COX20, SCO1 and SCO2. Interacts with TMEM177 in a COX20-dependent manner. Interacts with COX20. Interacts with COX16. The cofactor is Cu cation.

It localises to the mitochondrion inner membrane. It catalyses the reaction 4 Fe(II)-[cytochrome c] + O2 + 8 H(+)(in) = 4 Fe(III)-[cytochrome c] + 2 H2O + 4 H(+)(out). In terms of biological role, component of the cytochrome c oxidase, the last enzyme in the mitochondrial electron transport chain which drives oxidative phosphorylation. The respiratory chain contains 3 multisubunit complexes succinate dehydrogenase (complex II, CII), ubiquinol-cytochrome c oxidoreductase (cytochrome b-c1 complex, complex III, CIII) and cytochrome c oxidase (complex IV, CIV), that cooperate to transfer electrons derived from NADH and succinate to molecular oxygen, creating an electrochemical gradient over the inner membrane that drives transmembrane transport and the ATP synthase. Cytochrome c oxidase is the component of the respiratory chain that catalyzes the reduction of oxygen to water. Electrons originating from reduced cytochrome c in the intermembrane space (IMS) are transferred via the dinuclear copper A center (CU(A)) of subunit 2 and heme A of subunit 1 to the active site in subunit 1, a binuclear center (BNC) formed by heme A3 and copper B (CU(B)). The BNC reduces molecular oxygen to 2 water molecules using 4 electrons from cytochrome c in the IMS and 4 protons from the mitochondrial matrix. This Cratogeomys bursarius (Plains pocket gopher) protein is Cytochrome c oxidase subunit 2 (MT-CO2).